The chain runs to 241 residues: Large ribosomal subunit protein uL30 (241 aa).

The segment at 1-25 (MASTLKPETLVKKSKAQQKTAEERA) is disordered.

The protein belongs to the universal ribosomal protein uL30 family.

This chain is Large ribosomal subunit protein uL30 (RPL7), found in Debaryomyces hansenii (strain ATCC 36239 / CBS 767 / BCRC 21394 / JCM 1990 / NBRC 0083 / IGC 2968) (Yeast).